The sequence spans 470 residues: Serine/threonine-protein kinase PEPKR2 (470 aa).

The Protein kinase domain maps to 107-355 (YVFGRNIGKG…ADEVLRHPWI (249 aa)). Residues 113–121 (IGKGKFGSV) and lysine 136 contribute to the ATP site. The Proton acceptor role is filled by aspartate 224. Positions 377–386 (GSSTCLQNRS) are enriched in polar residues. Disordered stretches follow at residues 377-419 (GSST…EEED) and 441-464 (RSRVCSPTNNPIEQQHSSNLTSTS). Over residues 387–403 (PTEKTDLNRADREKKIP) the composition is skewed to basic and acidic residues. Positions 445–464 (CSPTNNPIEQQHSSNLTSTS) are enriched in polar residues.

This sequence belongs to the protein kinase superfamily. Ser/Thr protein kinase family.

The enzyme catalyses L-seryl-[protein] + ATP = O-phospho-L-seryl-[protein] + ADP + H(+). The catalysed reaction is L-threonyl-[protein] + ATP = O-phospho-L-threonyl-[protein] + ADP + H(+). This Arabidopsis thaliana (Mouse-ear cress) protein is Serine/threonine-protein kinase PEPKR2 (PEPKR2).